The sequence spans 757 residues: Catalase-peroxidase 2 (757 aa).

An N-terminal signal peptide occupies residues 1–26 (MKHPLFNQKVLAGFVSMLLISGSAFA). Residues 126-248 (WHSAGTYRTL…LGATHMGLIY (123 aa)) constitute a cross-link (tryptophyl-tyrosyl-methioninium (Trp-Tyr) (with M-274)). The Proton acceptor role is filled by H127. The segment at residues 248 to 274 (YVNPEGPKGVPDPLGSAKNIRVAFERM) is a cross-link (tryptophyl-tyrosyl-methioninium (Tyr-Met) (with W-126)). H289 serves as a coordination point for heme b.

It belongs to the peroxidase family. Peroxidase/catalase subfamily. In terms of assembly, homodimer or homotetramer. Heme b is required as a cofactor. Post-translationally, formation of the three residue Trp-Tyr-Met cross-link is important for the catalase, but not the peroxidase activity of the enzyme.

It carries out the reaction H2O2 + AH2 = A + 2 H2O. The enzyme catalyses 2 H2O2 = O2 + 2 H2O. Bifunctional enzyme with both catalase and broad-spectrum peroxidase activity. This Shewanella frigidimarina (strain NCIMB 400) protein is Catalase-peroxidase 2.